The following is a 748-amino-acid chain: Catalase-peroxidase (748 aa).

Over residues 1–14 (MTDTSDARPPHSDA) the composition is skewed to basic and acidic residues. Residues 1–40 (MTDTSDARPPHSDAKTASNSESENPAIDSPEPKSHAPLTN) are disordered. The tryptophyl-tyrosyl-methioninium (Trp-Tyr) (with M-265) cross-link spans 112 to 239 (WHAAGTYRIF…FGATTMGLIY (128 aa)). Histidine 113 serves as the catalytic Proton acceptor. A cross-link (tryptophyl-tyrosyl-methioninium (Tyr-Met) (with W-112)) is located at residues 239–265 (YVNPEGPEGKPDPLAAAHDIRETFGRM). Position 280 (histidine 280) interacts with heme b.

This sequence belongs to the peroxidase family. Peroxidase/catalase subfamily. Homodimer or homotetramer. Heme b is required as a cofactor. Post-translationally, formation of the three residue Trp-Tyr-Met cross-link is important for the catalase, but not the peroxidase activity of the enzyme.

It catalyses the reaction H2O2 + AH2 = A + 2 H2O. The catalysed reaction is 2 H2O2 = O2 + 2 H2O. Bifunctional enzyme with both catalase and broad-spectrum peroxidase activity. The sequence is that of Catalase-peroxidase from Mycolicibacterium gilvum (strain PYR-GCK) (Mycobacterium gilvum (strain PYR-GCK)).